Reading from the N-terminus, the 545-residue chain is Membrane protein insertase YidC (545 aa).

Residues asparagine 6–aspartate 26 traverse the membrane as a helical segment. The interval proline 31–alanine 54 is disordered. 4 consecutive transmembrane segments (helical) span residues lysine 342–valine 362, leucine 417–leucine 437, leucine 455–isoleucine 475, and proline 496–valine 516.

The protein belongs to the OXA1/ALB3/YidC family. Type 1 subfamily. Interacts with the Sec translocase complex via SecD. Specifically interacts with transmembrane segments of nascent integral membrane proteins during membrane integration.

It is found in the cell inner membrane. Functionally, required for the insertion and/or proper folding and/or complex formation of integral membrane proteins into the membrane. Involved in integration of membrane proteins that insert both dependently and independently of the Sec translocase complex, as well as at least some lipoproteins. Aids folding of multispanning membrane proteins. This is Membrane protein insertase YidC from Serratia proteamaculans (strain 568).